We begin with the raw amino-acid sequence, 381 residues long: MSRLQFQLQATDGHARRGRLTFPRGTVETPAFMPVGTYGSVKGILPEQIRALGAEIILGNTFHLYLRPGLEVIGDHGGLHGFARWDGPILTDSGGFQVFSLAHRRKITEQGVTFSSPTDGARVFLGPEESMKIQKVLDSDIVMIFDECTPYPATEDVARRSMELSLRWAQRSRDAHDGLGNDAALFGIVQGGVHPDLRSRSLDGLQAIGFDGYAIGGLAVGEPEHERNAMLEHLHPRLPAERPRYLMGVGRPEDLVEGVARGVDMFDCVMPTRNARNGHYFTSFGTVRIRNAKYERDLDTIEPGCGCHACSSGYTRAYLRHLDRCNEMLAPMLGTLHNLWYYEKLMADMRAAIASGTFVEFRRSFYAARGATTPPLPGETS.

Asp92 (proton acceptor) is an active-site residue. Substrate is bound by residues Asp92–Phe96, Asp146, Gln190, and Gly217. An RNA binding region spans residues Gly248–Asp254. Asp267 (nucleophile) is an active-site residue. Residues Thr272–Arg276 form an RNA binding; important for wobble base 34 recognition region. Residues Cys305, Cys307, Cys310, and His337 each coordinate Zn(2+).

This sequence belongs to the queuine tRNA-ribosyltransferase family. Homodimer. Within each dimer, one monomer is responsible for RNA recognition and catalysis, while the other monomer binds to the replacement base PreQ1. It depends on Zn(2+) as a cofactor.

The catalysed reaction is 7-aminomethyl-7-carbaguanine + guanosine(34) in tRNA = 7-aminomethyl-7-carbaguanosine(34) in tRNA + guanine. It participates in tRNA modification; tRNA-queuosine biosynthesis. Catalyzes the base-exchange of a guanine (G) residue with the queuine precursor 7-aminomethyl-7-deazaguanine (PreQ1) at position 34 (anticodon wobble position) in tRNAs with GU(N) anticodons (tRNA-Asp, -Asn, -His and -Tyr). Catalysis occurs through a double-displacement mechanism. The nucleophile active site attacks the C1' of nucleotide 34 to detach the guanine base from the RNA, forming a covalent enzyme-RNA intermediate. The proton acceptor active site deprotonates the incoming PreQ1, allowing a nucleophilic attack on the C1' of the ribose to form the product. After dissociation, two additional enzymatic reactions on the tRNA convert PreQ1 to queuine (Q), resulting in the hypermodified nucleoside queuosine (7-(((4,5-cis-dihydroxy-2-cyclopenten-1-yl)amino)methyl)-7-deazaguanosine). This Xanthomonas axonopodis pv. citri (strain 306) protein is Queuine tRNA-ribosyltransferase.